The chain runs to 880 residues: Translation initiation factor IF-2 (880 aa).

The tract at residues 259 to 281 is disordered; sequence KNREEARAVGRSSKSQSKRKSST. The 170-residue stretch at 379–548 folds into the tr-type G domain; that stretch reads SRAPVVTIMG…LLQAEVLELK (170 aa). The G1 stretch occupies residues 388–395; it reads GHVDHGKT. 388 to 395 provides a ligand contact to GTP; it reads GHVDHGKT. Positions 413–417 are G2; it reads GITQH. The segment at 434–437 is G3; it reads DTPG. Residues 434 to 438 and 488 to 491 contribute to the GTP site; these read DTPGH and NKID. Residues 488 to 491 form a G4 region; sequence NKID. The tract at residues 524-526 is G5; the sequence is SAK.

The protein belongs to the TRAFAC class translation factor GTPase superfamily. Classic translation factor GTPase family. IF-2 subfamily.

It localises to the cytoplasm. Functionally, one of the essential components for the initiation of protein synthesis. Protects formylmethionyl-tRNA from spontaneous hydrolysis and promotes its binding to the 30S ribosomal subunits. Also involved in the hydrolysis of GTP during the formation of the 70S ribosomal complex. The sequence is that of Translation initiation factor IF-2 from Baumannia cicadellinicola subsp. Homalodisca coagulata.